Consider the following 122-residue polypeptide: Large ribosomal subunit protein uL14 (122 aa).

Belongs to the universal ribosomal protein uL14 family. As to quaternary structure, part of the 50S ribosomal subunit. Forms a cluster with proteins L3 and L19. In the 70S ribosome, L14 and L19 interact and together make contacts with the 16S rRNA in bridges B5 and B8.

In terms of biological role, binds to 23S rRNA. Forms part of two intersubunit bridges in the 70S ribosome. This is Large ribosomal subunit protein uL14 from Bacillus velezensis (strain DSM 23117 / BGSC 10A6 / LMG 26770 / FZB42) (Bacillus amyloliquefaciens subsp. plantarum).